A 500-amino-acid polypeptide reads, in one-letter code: NAD(P)H-quinone oxidoreductase chain 4, chloroplastic (500 aa).

14 helical membrane passes run 4-24 (FPWL…IFFL), 37-57 (IGIC…FFQL), 87-107 (IGPI…AWPV), 113-130 (LFHF…GLFS), 134-154 (LLLF…LLSM), 167-187 (FILY…GMGL), 208-228 (ALEI…LPII), 242-262 (HYST…YGLI), 272-292 (AHSI…IYAA), 305-325 (IAYS…SITD), 330-350 (GAVL…FLAG), 386-406 (LALP…GIIT), 416-436 (VLIT…SLSM), and 462-482 (LFIS…PDFV).

Belongs to the complex I subunit 4 family.

It localises to the plastid. The protein resides in the chloroplast thylakoid membrane. The enzyme catalyses a plastoquinone + NADH + (n+1) H(+)(in) = a plastoquinol + NAD(+) + n H(+)(out). It carries out the reaction a plastoquinone + NADPH + (n+1) H(+)(in) = a plastoquinol + NADP(+) + n H(+)(out). This is NAD(P)H-quinone oxidoreductase chain 4, chloroplastic from Ceratophyllum demersum (Rigid hornwort).